Reading from the N-terminus, the 237-residue chain is Cuticlin-like protein 19 (237 aa).

The N-terminal stretch at 1–20 (MVEYNRIFCVLVIFSTTIKC) is a signal peptide.

Interacts with vps-51 and vps-52. As to expression, expression detected in motor neurons.

The protein resides in the golgi apparatus. It localises to the trans-Golgi network. This is Cuticlin-like protein 19 (cutl-19) from Caenorhabditis elegans.